A 239-amino-acid chain; its full sequence is Ribosomal RNA small subunit methyltransferase G (239 aa).

S-adenosyl-L-methionine-binding positions include Gly78, Phe83, 129–130 (AE), and Arg148.

This sequence belongs to the methyltransferase superfamily. RNA methyltransferase RsmG family.

It is found in the cytoplasm. In terms of biological role, specifically methylates the N7 position of a guanine in 16S rRNA. The sequence is that of Ribosomal RNA small subunit methyltransferase G from Clostridium perfringens (strain 13 / Type A).